Reading from the N-terminus, the 144-residue chain is Cystatin-F (144 aa).

A signal peptide spans 1-18 (MWLAILLALCCLTSDTHG). An N-linked (GlcNAc...) asparagine glycan is attached at Asn-61. The Secondary area of contact motif lies at 80-84 (QVVKG). 2 disulfides stabilise this stretch: Cys-98–Cys-109 and Cys-123–Cys-143.

Belongs to the cystatin family.

The protein localises to the secreted. Inhibits papain and cathepsin L but with affinities lower than other cystatins. May play a role in immune regulation through inhibition of a unique target in the hematopoietic system. This chain is Cystatin-F (Cst7), found in Mus musculus (Mouse).